The primary structure comprises 270 residues: NADPH-dependent 7-cyano-7-deazaguanine reductase (270 aa).

79 to 81 (IES) is a binding site for substrate. 81-82 (SK) is a binding site for NADPH. The active-site Thioimide intermediate is the C177. D184 serves as the catalytic Proton donor. Residue 216-217 (HE) coordinates substrate. Residue 245-246 (RG) coordinates NADPH.

It belongs to the GTP cyclohydrolase I family. QueF type 2 subfamily. As to quaternary structure, homodimer.

The protein localises to the cytoplasm. It carries out the reaction 7-aminomethyl-7-carbaguanine + 2 NADP(+) = 7-cyano-7-deazaguanine + 2 NADPH + 3 H(+). It functions in the pathway tRNA modification; tRNA-queuosine biosynthesis. In terms of biological role, catalyzes the NADPH-dependent reduction of 7-cyano-7-deazaguanine (preQ0) to 7-aminomethyl-7-deazaguanine (preQ1). The chain is NADPH-dependent 7-cyano-7-deazaguanine reductase from Acinetobacter baumannii (strain ACICU).